Here is a 318-residue protein sequence, read N- to C-terminus: NADH-ubiquinone oxidoreductase chain 1 (318 aa).

8 helical membrane passes run 2–22 (FMIN…FLTL), 69–89 (FMFT…WVPL), 102–122 (MLFI…SGWA), 146–166 (LAII…STLT), 171–191 (HLWL…STLA), 231–251 (IIMM…NPLL), 253–273 (EAHT…FLWV), and 294–314 (LPLT…LACI).

Belongs to the complex I subunit 1 family. In terms of assembly, core subunit of respiratory chain NADH dehydrogenase (Complex I) which is composed of 45 different subunits.

It is found in the mitochondrion inner membrane. It carries out the reaction a ubiquinone + NADH + 5 H(+)(in) = a ubiquinol + NAD(+) + 4 H(+)(out). Core subunit of the mitochondrial membrane respiratory chain NADH dehydrogenase (Complex I) which catalyzes electron transfer from NADH through the respiratory chain, using ubiquinone as an electron acceptor. Essential for the catalytic activity and assembly of complex I. This is NADH-ubiquinone oxidoreductase chain 1 (MT-ND1) from Dugong dugon (Dugong).